The primary structure comprises 287 residues: Nucleotide-binding protein MXAN_6564 (287 aa).

13–20 lines the ATP pocket; that stretch reads GMSGSGKS. 62 to 65 is a GTP binding site; that stretch reads DVRE.

The protein belongs to the RapZ-like family.

In terms of biological role, displays ATPase and GTPase activities. The chain is Nucleotide-binding protein MXAN_6564 from Myxococcus xanthus (strain DK1622).